We begin with the raw amino-acid sequence, 401 residues long: Argininosuccinate synthase (401 aa).

ATP-binding positions include 11 to 19 (AYSGGLDTS) and Ala38. Positions 89 and 94 each coordinate L-citrulline. Gly119 serves as a coordination point for ATP. The L-aspartate site is built by Thr121, Asn125, and Asp126. Asn125 provides a ligand contact to L-citrulline. L-citrulline-binding residues include Arg129, Ser177, Ser186, Glu262, and Tyr274.

The protein belongs to the argininosuccinate synthase family. Type 1 subfamily. As to quaternary structure, homotetramer.

It is found in the cytoplasm. It carries out the reaction L-citrulline + L-aspartate + ATP = 2-(N(omega)-L-arginino)succinate + AMP + diphosphate + H(+). It functions in the pathway amino-acid biosynthesis; L-arginine biosynthesis; L-arginine from L-ornithine and carbamoyl phosphate: step 2/3. This Nitratidesulfovibrio vulgaris (strain DSM 19637 / Miyazaki F) (Desulfovibrio vulgaris) protein is Argininosuccinate synthase.